A 182-amino-acid chain; its full sequence is Large ribosomal subunit protein uL6 (182 aa).

This sequence belongs to the universal ribosomal protein uL6 family. Part of the 50S ribosomal subunit.

In terms of biological role, this protein binds to the 23S rRNA, and is important in its secondary structure. It is located near the subunit interface in the base of the L7/L12 stalk, and near the tRNA binding site of the peptidyltransferase center. This is Large ribosomal subunit protein uL6 from Nostoc sp. (strain PCC 7120 / SAG 25.82 / UTEX 2576).